The chain runs to 188 residues: Adenylate kinase (188 aa).

Residue 11–16 (GAGKGT) participates in ATP binding. The segment at 31–60 (STGDIFRANIKDQTELGREAQRYTDAGNLV) is NMP. AMP-binding positions include Thr32, Arg37, 58–60 (NLV), 86–89 (GYPR), and Gln93. The tract at residues 127-137 (GRAQEQGRTDD) is LID. Arg128 contacts ATP. 2 residues coordinate AMP: Arg134 and Arg145. Gly173 contacts ATP.

Belongs to the adenylate kinase family. In terms of assembly, monomer.

It localises to the cytoplasm. The catalysed reaction is AMP + ATP = 2 ADP. Its pathway is purine metabolism; AMP biosynthesis via salvage pathway; AMP from ADP: step 1/1. In terms of biological role, catalyzes the reversible transfer of the terminal phosphate group between ATP and AMP. Plays an important role in cellular energy homeostasis and in adenine nucleotide metabolism. This is Adenylate kinase from Kocuria rhizophila (strain ATCC 9341 / DSM 348 / NBRC 103217 / DC2201).